The chain runs to 137 residues: AVCVSLLGAANIPPQHLNLYQFKEMIRYTIPCEKTWGEYADYGCYCGAGGSGRPIDALDRCCYVHDNCYGDAEKKHKCNPKTQSYSYKLTKRTIICYGAAGTCGRIVCDCDRTTALCFGNSEYIEGHKNIDTARFCQ.

An N-terminal signal peptide occupies residues 1-9 (AVCVSLLGA). Residues 10–17 (ANIPPQHL) constitute a propeptide that is removed on maturation. 6 cysteine pairs are disulfide-bonded: cysteine 44-cysteine 136, cysteine 46-cysteine 62, cysteine 61-cysteine 117, cysteine 68-cysteine 110, cysteine 78-cysteine 103, and cysteine 96-cysteine 108. Ca(2+) is bound by residues tyrosine 45, glycine 47, and glycine 49. Histidine 65 is a catalytic residue. Aspartate 66 serves as a coordination point for Ca(2+). Aspartate 111 is an active-site residue.

This sequence belongs to the phospholipase A2 family. Group I subfamily. D49 sub-subfamily. Heterodimer; disulfide-linked. The A chains have phospholipase A2 activity and the B chains show homology with the basic protease inhibitors. Ca(2+) is required as a cofactor. Expressed by the venom gland.

The protein localises to the secreted. The enzyme catalyses a 1,2-diacyl-sn-glycero-3-phosphocholine + H2O = a 1-acyl-sn-glycero-3-phosphocholine + a fatty acid + H(+). Snake venom phospholipase A2 (PLA2) that inhibits neuromuscular transmission by blocking acetylcholine release from the nerve termini. PLA2 catalyzes the calcium-dependent hydrolysis of the 2-acyl groups in 3-sn-phosphoglycerides. The sequence is that of Basic phospholipase A2 beta-bungarotoxin A5 chain from Bungarus multicinctus (Many-banded krait).